The chain runs to 538 residues: Putative cysteine ligase BshC (538 aa).

Positions 248–268 form a coiled coil; the sequence is ISKYKEVQEGLRNQQEVIKEL.

It belongs to the BshC family.

Functionally, involved in bacillithiol (BSH) biosynthesis. May catalyze the last step of the pathway, the addition of cysteine to glucosamine malate (GlcN-Mal) to generate BSH. The polypeptide is Putative cysteine ligase BshC (Bacillus cereus (strain G9842)).